The primary structure comprises 167 residues: Claudin domain-containing protein 2 (167 aa).

A run of 4 helical transmembrane segments spans residues 13–32 (LLNLLSSILTVLSTTTNYWT), 61–81 (VSAACMVLAATFSIVALGIGI), 96–116 (TIVLLFLSGLLLLIALAVYTS), and 130–150 (YFFGWLALPFLFIAGFCFLLA).

This sequence belongs to the PMP-22/EMP/MP20 family.

It is found in the membrane. This chain is Claudin domain-containing protein 2 (Cldnd2), found in Mus musculus (Mouse).